The primary structure comprises 78 residues: Sec-independent protein translocase protein TatA (78 aa).

The chain crosses the membrane as a helical span at residues 1–21 (MGSLSIWHWIVVIAVVLLLFG). Residues 43–60 (LQDDEKTAEKSEPVKSID) show a composition bias toward basic and acidic residues. A disordered region spans residues 43-78 (LQDDEKTAEKSEPVKSIDHTSTPGATNRTDVGSKAV). Over residues 61 to 72 (HTSTPGATNRTD) the composition is skewed to polar residues.

Belongs to the TatA/E family. As to quaternary structure, the Tat system comprises two distinct complexes: a TatABC complex, containing multiple copies of TatA, TatB and TatC subunits, and a separate TatA complex, containing only TatA subunits. Substrates initially bind to the TatABC complex, which probably triggers association of the separate TatA complex to form the active translocon.

It localises to the cell inner membrane. In terms of biological role, part of the twin-arginine translocation (Tat) system that transports large folded proteins containing a characteristic twin-arginine motif in their signal peptide across membranes. TatA could form the protein-conducting channel of the Tat system. The protein is Sec-independent protein translocase protein TatA of Rhodopseudomonas palustris (strain ATCC BAA-98 / CGA009).